A 25-amino-acid chain; its full sequence is Antifungal protein 1 (25 aa).

Residues 1–25 are disordered; the sequence is QSERFEQQMQGQDFSHDERFLSQAA. Residues 14 to 25 are compositionally biased toward basic and acidic residues; the sequence is FSHDERFLSQAA.

The protein belongs to the 2S seed storage albumins family. As to expression, expressed in seed (at protein level). Not detected in pulp, stems and leaves.

Has strong antifungal activity against T.harzianum, F.oxysporum and A.fumigatus with IC(50) values of 32 ug/ml, 34 ug/ml and 40 ug/ml, restectively. Lacks antifungal activity against R.solani, P.brasiliensis and C.albicans. This Passiflora edulis (Passion fruit) protein is Antifungal protein 1.